A 73-amino-acid polypeptide reads, in one-letter code: MIIPWQQIDPTTLYNLIESFVLREGTDYGLQEKSLQQKVADVLRQVQSGEAVLVWSELHESINIMPRGQYRPY.

Belongs to the UPF0270 family.

In Sodalis glossinidius (strain morsitans), this protein is UPF0270 protein SG2298.